We begin with the raw amino-acid sequence, 126 residues long: Histone H2B type 2-B (126 aa).

Residues 1-12 (MPDPAKSAPAPK) are compositionally biased toward low complexity. A disordered region spans residues 1–36 (MPDPAKSAPAPKKGSKKAVTKVQKKDGKKRKRSRKE). Pro2 is modified (N-acetylproline). Lys6 carries the N6-(2-hydroxyisobutyryl)lysine; alternate modification. An N6-(beta-hydroxybutyryl)lysine; alternate modification is found at Lys6. An N6-acetyllysine; alternate modification is found at Lys6. Position 6 is an N6-butyryllysine; alternate (Lys6). Lys6 is subject to N6-crotonyllysine; alternate. Position 6 is an N6-lactoyllysine; alternate (Lys6). Lys6 participates in a covalent cross-link: Glycyl lysine isopeptide (Lys-Gly) (interchain with G-Cter in SUMO2); alternate. An ADP-ribosylserine modification is found at Ser7. Position 12 is an N6-(beta-hydroxybutyryl)lysine; alternate (Lys12). N6-acetyllysine; alternate occurs at positions 12 and 13. An N6-crotonyllysine; alternate mark is found at Lys12 and Lys13. N6-lactoyllysine; alternate is present on Lys12. The residue at position 13 (Lys13) is an N6-(2-hydroxyisobutyryl)lysine; alternate. At Ser15 the chain carries Phosphoserine; by STK4/MST1. N6-acetyllysine; alternate occurs at positions 16, 17, 21, and 24. 4 positions are modified to N6-crotonyllysine; alternate: Lys16, Lys17, Lys21, and Lys24. N6-lactoyllysine; alternate is present on residues Lys16, Lys17, Lys21, and Lys24. Position 17 is an N6-glutaryllysine; alternate (Lys17). An N6-(2-hydroxyisobutyryl)lysine; alternate mark is found at Lys21 and Lys24. Residue Lys21 is modified to N6-(beta-hydroxybutyryl)lysine; alternate. Lys21 carries the post-translational modification N6-butyryllysine; alternate. Lys21 is covalently cross-linked (Glycyl lysine isopeptide (Lys-Gly) (interchain with G-Cter in SUMO2); alternate). Lys25 bears the N6-(2-hydroxyisobutyryl)lysine mark. Lys35 carries the N6-(2-hydroxyisobutyryl)lysine; alternate modification. An N6-(beta-hydroxybutyryl)lysine; alternate modification is found at Lys35. Lys35 carries the N6-crotonyllysine; alternate modification. Lys35 carries the N6-glutaryllysine; alternate modification. An N6-succinyllysine; alternate modification is found at Lys35. Lys35 participates in a covalent cross-link: Glycyl lysine isopeptide (Lys-Gly) (interchain with G-Cter in ubiquitin); alternate. Glu36 carries the post-translational modification PolyADP-ribosyl glutamic acid. Ser37 carries the phosphoserine; by AMPK modification. 3 positions are modified to N6-(2-hydroxyisobutyryl)lysine; alternate: Lys44, Lys47, and Lys58. The residue at position 44 (Lys44) is an N6-lactoyllysine; alternate. An N6-glutaryllysine; alternate mark is found at Lys44 and Lys47. N6-methyllysine; alternate is present on Lys47. N6,N6-dimethyllysine; alternate is present on Lys58. Residue Arg80 is modified to Dimethylated arginine. Lys86 bears the N6-(2-hydroxyisobutyryl)lysine; alternate mark. Position 86 is an N6-acetyllysine; alternate (Lys86). Residue Lys86 is modified to N6-lactoyllysine; alternate. Lys86 bears the N6,N6,N6-trimethyllysine; alternate mark. Omega-N-methylarginine is present on residues Arg87 and Arg93. Lys109 carries the post-translational modification N6-(2-hydroxyisobutyryl)lysine; alternate. The residue at position 109 (Lys109) is an N6-(beta-hydroxybutyryl)lysine; alternate. Position 109 is an N6-lactoyllysine; alternate (Lys109). Lys109 carries the post-translational modification N6-glutaryllysine; alternate. Lys109 is modified (N6-methyllysine; alternate). Ser113 carries O-linked (GlcNAc) serine glycosylation. Phosphothreonine is present on Thr116. N6-(2-hydroxyisobutyryl)lysine; alternate is present on residues Lys117 and Lys121. The residue at position 117 (Lys117) is an N6-(beta-hydroxybutyryl)lysine; alternate. N6-lactoyllysine; alternate is present on residues Lys117 and Lys121. 2 positions are modified to N6-glutaryllysine; alternate: Lys117 and Lys121. N6-succinyllysine; alternate is present on residues Lys117 and Lys121. An N6-methylated lysine; alternate modification is found at Lys117. Lys121 is covalently cross-linked (Glycyl lysine isopeptide (Lys-Gly) (interchain with G-Cter in ubiquitin); alternate).

Belongs to the histone H2B family. The nucleosome is a histone octamer containing two molecules each of H2A, H2B, H3 and H4 assembled in one H3-H4 heterotetramer and two H2A-H2B heterodimers. The octamer wraps approximately 147 bp of DNA. Post-translationally, monoubiquitination at Lys-35 (H2BK34Ub) by the MSL1/MSL2 dimer is required for histone H3 'Lys-4' (H3K4me) and 'Lys-79' (H3K79me) methylation and transcription activation at specific gene loci, such as HOXA9 and MEIS1 loci. Similarly, monoubiquitination at Lys-121 (H2BK120Ub) by the RNF20/40 complex gives a specific tag for epigenetic transcriptional activation and is also prerequisite for histone H3 'Lys-4' and 'Lys-79' methylation. It also functions cooperatively with the FACT dimer to stimulate elongation by RNA polymerase II. H2BK120Ub also acts as a regulator of mRNA splicing: deubiquitination by USP49 is required for efficient cotranscriptional splicing of a large set of exons. Phosphorylated on Ser-15 (H2BS14ph) by STK4/MST1 during apoptosis; which facilitates apoptotic chromatin condensation. Also phosphorylated on Ser-15 in response to DNA double strand breaks (DSBs), and in correlation with somatic hypermutation and immunoglobulin class-switch recombination. Phosphorylation at Ser-37 (H2BS36ph) by AMPK in response to stress promotes transcription. In terms of processing, glcNAcylation at Ser-113 promotes monoubiquitination of Lys-121. It fluctuates in response to extracellular glucose, and associates with transcribed genes. Post-translationally, ADP-ribosylated by PARP1 or PARP2 on Ser-7 (H2BS6ADPr) in response to DNA damage. H2BS6ADPr promotes recruitment of CHD1L. Poly ADP-ribosylation on Glu-36 (H2BE35ADPr) by PARP1 regulates adipogenesis: it inhibits phosphorylation at Ser-37 (H2BS36ph), thereby blocking expression of pro-adipogenetic genes. Crotonylation (Kcr) is specifically present in male germ cells and marks testis-specific genes in post-meiotic cells, including X-linked genes that escape sex chromosome inactivation in haploid cells. Crotonylation marks active promoters and enhancers and confers resistance to transcriptional repressors. It is also associated with post-meiotically activated genes on autosomes. In terms of processing, hydroxybutyrylation of histones is induced by starvation. Post-translationally, lactylated in macrophages by EP300/P300 by using lactoyl-CoA directly derived from endogenous or exogenous lactate, leading to stimulates gene transcription.

The protein resides in the nucleus. Its subcellular location is the chromosome. Core component of nucleosome. Nucleosomes wrap and compact DNA into chromatin, limiting DNA accessibility to the cellular machineries which require DNA as a template. Histones thereby play a central role in transcription regulation, DNA repair, DNA replication and chromosomal stability. DNA accessibility is regulated via a complex set of post-translational modifications of histones, also called histone code, and nucleosome remodeling. In Mus musculus (Mouse), this protein is Histone H2B type 2-B.